Here is a 176-residue protein sequence, read N- to C-terminus: MAFDELLNDPVIQKYLHELVGPTGMPVAAAPPDGEVTDEELAEELGLELNDVRRALFILYENDLATYRRVRDEDSGWLTYLWTFHYENIPENLQSEMYRLLDALEERLEYERSHEFYLSEPAGIRFEFSEAMELGFQCPETGAPLEPIENQEMINAMERRIDSLQSELNVGVTQTV.

The 83-residue stretch at 8–90 (NDPVIQKYLH…LWTFHYENIP (83 aa)) folds into the HTH TFE/IIEalpha-type domain.

Belongs to the TFE family. As to quaternary structure, monomer. Interaction with RNA polymerase subunits RpoF and RpoE is necessary for Tfe stimulatory transcription activity. Able to interact with Tbp and RNA polymerase in the absence of DNA promoter. Interacts both with the preinitiation and elongation complexes.

Its function is as follows. Transcription factor that plays a role in the activation of archaeal genes transcribed by RNA polymerase. Facilitates transcription initiation by enhancing TATA-box recognition by TATA-box-binding protein (Tbp), and transcription factor B (Tfb) and RNA polymerase recruitment. Not absolutely required for transcription in vitro, but particularly important in cases where Tbp or Tfb function is not optimal. It dynamically alters the nucleic acid-binding properties of RNA polymerases by stabilizing the initiation complex and destabilizing elongation complexes. Seems to translocate with the RNA polymerase following initiation and acts by binding to the non template strand of the transcription bubble in elongation complexes. The polypeptide is Transcription factor E (Haloquadratum walsbyi (strain DSM 16790 / HBSQ001)).